The following is a 431-amino-acid chain: Phosphomethylpyrimidine synthase (431 aa).

Substrate is bound by residues N66, M95, Y124, H163, S185–G187, D226–R229, and E265. Zn(2+) is bound at residue H269. Y292 provides a ligand contact to substrate. H333 is a Zn(2+) binding site. Residues C408, C411, and C415 each contribute to the [4Fe-4S] cluster site.

The protein belongs to the ThiC family. The cofactor is [4Fe-4S] cluster.

It carries out the reaction 5-amino-1-(5-phospho-beta-D-ribosyl)imidazole + S-adenosyl-L-methionine = 4-amino-2-methyl-5-(phosphooxymethyl)pyrimidine + CO + 5'-deoxyadenosine + formate + L-methionine + 3 H(+). It functions in the pathway cofactor biosynthesis; thiamine diphosphate biosynthesis. In terms of biological role, catalyzes the synthesis of the hydroxymethylpyrimidine phosphate (HMP-P) moiety of thiamine from aminoimidazole ribotide (AIR) in a radical S-adenosyl-L-methionine (SAM)-dependent reaction. This is Phosphomethylpyrimidine synthase from Dehalococcoides mccartyi (strain CBDB1).